We begin with the raw amino-acid sequence, 499 residues long: Serine carboxypeptidase-like 34 (499 aa).

An N-terminal signal peptide occupies residues 1 to 25 (MGSHSVEFSVLVLFLVSFLLGSTSA). Residues Asn-73, Asn-124, and Asn-158 are each glycosylated (N-linked (GlcNAc...) asparagine). 3 disulfide bridges follow: Cys-106–Cys-383, Cys-269–Cys-280, and Cys-304–Cys-351. Ser-200 is a catalytic residue. N-linked (GlcNAc...) asparagine glycosylation is found at Asn-310, Asn-372, and Asn-375. Active-site residues include Asp-419 and His-471.

The protein belongs to the peptidase S10 family. In terms of tissue distribution, ubiquitous.

It localises to the secreted. Its function is as follows. Probable carboxypeptidase. The protein is Serine carboxypeptidase-like 34 (SCPL34) of Arabidopsis thaliana (Mouse-ear cress).